We begin with the raw amino-acid sequence, 643 residues long: Transducer protein Htr8 (643 aa).

5 consecutive transmembrane segments (helical) span residues 48-68 (VFVL…GTES), 79-99 (PGIL…LASI), 115-134 (VLAS…EAHF), 149-169 (WLPF…FGMI), and 184-204 (PWVW…ALMA). The HAMP domain maps to 273 to 326 (ERLEATANTYGAAMARAADGDLSVRLDPDVENDAMAAIAASFNEMLDETETTIR). The Methyl-accepting transducer domain maps to 345–581 (GVVEIEDASG…EAVSMIAEVS (237 aa)).

It belongs to the methyl-accepting chemotaxis (MCP) protein family. In terms of processing, methylated by CheR.

It is found in the cell membrane. Its function is as follows. Potentially involved in chemo- or phototactic signal transduction. In Halobacterium salinarum (strain ATCC 29341 / DSM 671 / R1), this protein is Transducer protein Htr8 (htr8).